Reading from the N-terminus, the 186-residue chain is Large ribosomal subunit protein uL5 (186 aa).

The protein belongs to the universal ribosomal protein uL5 family. Part of the 50S ribosomal subunit; contacts the 5S rRNA and probably tRNA. Forms a bridge to the 30S subunit in the 70S ribosome.

This is one of the proteins that bind and probably mediate the attachment of the 5S RNA into the large ribosomal subunit, where it forms part of the central protuberance. In the 70S ribosome it contacts protein S13 of the 30S subunit (bridge B1b), connecting the 2 subunits; this bridge is implicated in subunit movement. May contact the P site tRNA; the 5S rRNA and some of its associated proteins might help stabilize positioning of ribosome-bound tRNAs. The chain is Large ribosomal subunit protein uL5 from Methanopyrus kandleri (strain AV19 / DSM 6324 / JCM 9639 / NBRC 100938).